The following is a 491-amino-acid chain: Probable polygalacturonase (491 aa).

The helical transmembrane segment at 15-35 threads the bilayer; the sequence is PIVSFYCFQVVSVLVAVVLLL. Asparagine 165, asparagine 175, and asparagine 214 each carry an N-linked (GlcNAc...) asparagine glycan. 4 PbH1 repeats span residues 230 to 256, 257 to 278, 319 to 340, and 348 to 369; these read SRNI…NPDS, CTNT…AVKS, IQDV…RIKT, and VKDI…WMTG. The active-site Proton donor is aspartate 271. Residues asparagine 399 and asparagine 421 are each glycosylated (N-linked (GlcNAc...) asparagine).

This sequence belongs to the glycosyl hydrolase 28 family.

Its subcellular location is the membrane. It carries out the reaction (1,4-alpha-D-galacturonosyl)n+m + H2O = (1,4-alpha-D-galacturonosyl)n + (1,4-alpha-D-galacturonosyl)m.. The chain is Probable polygalacturonase from Vitis vinifera (Grape).